Reading from the N-terminus, the 635-residue chain is Threonine--tRNA ligase (635 aa).

The region spanning 1-61 (MPVIRLPDGS…TDDADLSIIT (61 aa)) is the TGS domain. The catalytic stretch occupies residues 242–533 (DHRKLGRQLD…LIENYAGAMP (292 aa)). Residues Cys-333, His-384, and His-510 each contribute to the Zn(2+) site.

It belongs to the class-II aminoacyl-tRNA synthetase family. Homodimer. Zn(2+) is required as a cofactor.

Its subcellular location is the cytoplasm. It catalyses the reaction tRNA(Thr) + L-threonine + ATP = L-threonyl-tRNA(Thr) + AMP + diphosphate + H(+). Functionally, catalyzes the attachment of threonine to tRNA(Thr) in a two-step reaction: L-threonine is first activated by ATP to form Thr-AMP and then transferred to the acceptor end of tRNA(Thr). Also edits incorrectly charged L-seryl-tRNA(Thr). The chain is Threonine--tRNA ligase from Methylobacillus flagellatus (strain ATCC 51484 / DSM 6875 / VKM B-1610 / KT).